Here is a 188-residue protein sequence, read N- to C-terminus: Probable manganese efflux pump MntP (188 aa).

The next 5 helical transmembrane spans lie at 3-23 (ITAT…ASVG), 66-86 (LEWN…RMII), 106-128 (WLLV…GLAF), 143-163 (ATLI…SIIG), and 168-188 (ILGG…HFHG).

It belongs to the MntP (TC 9.B.29) family.

The protein resides in the cell inner membrane. In terms of biological role, probably functions as a manganese efflux pump. The chain is Probable manganese efflux pump MntP from Shigella sonnei (strain Ss046).